A 72-amino-acid polypeptide reads, in one-letter code: Probable transcription factor elt-4 (72 aa).

The GATA-type zinc-finger motif lies at 16–40 (CSNCNGTNTTLWRRKAEGDPVCNAC).

The protein resides in the nucleus. In terms of biological role, probable transcription factor. Plays a role in regulating heme-dependent expression of heme transporter hrg-1. Modulates lifespan in a daf-16-dependent manner. The protein is Probable transcription factor elt-4 of Caenorhabditis elegans.